Here is a 161-residue protein sequence, read N- to C-terminus: Peptidyl-prolyl cis-trans isomerase-like 1 (161 aa).

In terms of domain architecture, PPIase cyclophilin-type spans Met1–Val155.

This sequence belongs to the cyclophilin-type PPIase family. PPIL1 subfamily.

The catalysed reaction is [protein]-peptidylproline (omega=180) = [protein]-peptidylproline (omega=0). Functionally, PPIases accelerate the folding of proteins. It catalyzes the cis-trans isomerization of proline imidic peptide bonds in oligopeptides. This is Peptidyl-prolyl cis-trans isomerase-like 1 (cyp1) from Aspergillus oryzae (strain ATCC 42149 / RIB 40) (Yellow koji mold).